Consider the following 308-residue polypeptide: Protein doublecortin (308 aa).

In terms of domain architecture, Doublecortin 1 spans 21–104 (ARVILFRNGD…AEPLNTEVIP (84 aa)). The interval 115–167 (EVSDQDDEPKPSKPFVSSVPPPPTPTPTSSSGTTTTSQPTLSASPSVSSAQSP) is disordered. Residues 141–167 (PTSSSGTTTTSQPTLSASPSVSSAQSP) show a composition bias toward low complexity. One can recognise a Doublecortin 2 domain in the interval 194-277 (KVIMCFRNGD…GETLNPLDFS (84 aa)). Residues 282–308 (EHVKQKKLQEQQQQASEQQKPQEQEIF) are disordered. The span at 291-300 (EQQQQASEQQ) shows a compositional bias: low complexity.

In terms of assembly, interacts with lis1.

The protein resides in the cytoplasm. It is found in the cytoskeleton. Has a cytoskeleton-independent function in chemotactic signaling during development. The polypeptide is Protein doublecortin (dcx) (Dictyostelium discoideum (Social amoeba)).